A 164-amino-acid polypeptide reads, in one-letter code: Arginine repressor (164 aa).

Belongs to the ArgR family.

It localises to the cytoplasm. It participates in amino-acid biosynthesis; L-arginine biosynthesis [regulation]. Functionally, regulates arginine biosynthesis genes. In Thermus thermophilus (strain ATCC BAA-163 / DSM 7039 / HB27), this protein is Arginine repressor.